A 566-amino-acid polypeptide reads, in one-letter code: Osteoclast stimulatory transmembrane protein (566 aa).

Topologically, residues 1-51 are cytoplasmic; the sequence is MPGHPGAAEQLVKTGWRSWHLGFWKALAPLQAAWDAFSQPVPASCGQLLTQ. A helical transmembrane segment spans residues 52–72; that stretch reads LLLCASLAAAAAGLVYHWLAS. Over 73–81 the chain is Extracellular; it reads LLLYPPGPS. Residues 82–102 form a helical membrane-spanning segment; that stretch reads AMVATVCGLLVFLSLGLVPPV. Topologically, residues 103–128 are cytoplasmic; it reads RCLFALSVPTLGMEQGRRLLLSYSTA. Residues 129–149 traverse the membrane as a helical segment; that stretch reads TLAIAVVPNVLANVGAAGQVL. At 150–227 the chain is on the extracellular side; sequence RCVTEGSLES…ARAAALGTQR (78 aa). A helical membrane pass occupies residues 228-248; sequence VVTGLFMLGLLVESAWYLHCY. At 249–304 the chain is on the cytoplasmic side; sequence LTDLRFDNIYATQQLTQRLAQAQATHLLAPPPTWLLQAAQLRLSQEELLSCLLRLG. Residues 305–325 traverse the membrane as a helical segment; the sequence is LLALLLVATAVAVATDHVAFL. The Extracellular portion of the chain corresponds to 326 to 398; it reads LAQATVDWAQ…CPLLPARRPR (73 aa). A helical membrane pass occupies residues 399–419; it reads AAAPLAAGALQLLAGSTVLLE. The Cytoplasmic segment spans residues 420–566; it reads AYARRLRHAI…EGNTGHDRPG (147 aa).

The protein localises to the membrane. In terms of biological role, probable cell surface receptor that plays a role in cellular fusion and cell differentiation. Cooperates with DCSTAMP in modulating cell-cell fusion in both osteoclasts and foreign body giant cells (FBGCs). Involved in osteoclast bone resorption. Promotes osteoclast differentiation and may play a role in the multinucleated osteoclast maturation. In Homo sapiens (Human), this protein is Osteoclast stimulatory transmembrane protein (OCSTAMP).